A 166-amino-acid polypeptide reads, in one-letter code: Regulatory protein RecX (166 aa).

It belongs to the RecX family.

It localises to the cytoplasm. Its function is as follows. Modulates RecA activity. This is Regulatory protein RecX from Escherichia fergusonii (strain ATCC 35469 / DSM 13698 / CCUG 18766 / IAM 14443 / JCM 21226 / LMG 7866 / NBRC 102419 / NCTC 12128 / CDC 0568-73).